We begin with the raw amino-acid sequence, 303 residues long: UDP-3-O-acyl-N-acetylglucosamine deacetylase (303 aa).

Zn(2+) contacts are provided by histidine 78, histidine 237, and aspartate 241. Histidine 264 functions as the Proton donor in the catalytic mechanism.

This sequence belongs to the LpxC family. It depends on Zn(2+) as a cofactor.

The enzyme catalyses a UDP-3-O-[(3R)-3-hydroxyacyl]-N-acetyl-alpha-D-glucosamine + H2O = a UDP-3-O-[(3R)-3-hydroxyacyl]-alpha-D-glucosamine + acetate. The protein operates within glycolipid biosynthesis; lipid IV(A) biosynthesis; lipid IV(A) from (3R)-3-hydroxytetradecanoyl-[acyl-carrier-protein] and UDP-N-acetyl-alpha-D-glucosamine: step 2/6. Functionally, catalyzes the hydrolysis of UDP-3-O-myristoyl-N-acetylglucosamine to form UDP-3-O-myristoylglucosamine and acetate, the committed step in lipid A biosynthesis. The sequence is that of UDP-3-O-acyl-N-acetylglucosamine deacetylase from Pseudomonas fluorescens (strain Pf0-1).